Consider the following 544-residue polypeptide: Chaperonin GroEL 3 (544 aa).

ATP is bound by residues 30–33 (TLGP), Lys-51, 87–91 (DGTTT), Gly-415, and Asp-496.

It belongs to the chaperonin (HSP60) family. In terms of assembly, forms a cylinder of 14 subunits composed of two heptameric rings stacked back-to-back. Interacts with the co-chaperonin GroES.

It is found in the cytoplasm. The enzyme catalyses ATP + H2O + a folded polypeptide = ADP + phosphate + an unfolded polypeptide.. Its function is as follows. Together with its co-chaperonin GroES, plays an essential role in assisting protein folding. The GroEL-GroES system forms a nano-cage that allows encapsulation of the non-native substrate proteins and provides a physical environment optimized to promote and accelerate protein folding. The protein is Chaperonin GroEL 3 of Rhizobium meliloti (strain 1021) (Ensifer meliloti).